Here is a 185-residue protein sequence, read N- to C-terminus: MVSSFRVQQAAREIRAGAVIAYPTEAVWGLGCDPWNEDAVYRLLALKSRPVDKGLILIADNIRQFDFLFEDFPEDWIERMGSTWPGPNTWLVPHQDLLPEWVTGKHDTVALRVTDHPQVRELCALVGPLISTSCNPGGRPAAKTRLRVEQYFHGQLDLVLGGALGGRKNPSVIRNLATGEVVRPG.

A YrdC-like domain is found at 4 to 185 (SFRVQQAARE…LATGEVVRPG (182 aa)).

It belongs to the SUA5 family. TsaC subfamily.

The protein resides in the cytoplasm. It catalyses the reaction L-threonine + hydrogencarbonate + ATP = L-threonylcarbamoyladenylate + diphosphate + H2O. In terms of biological role, required for the formation of a threonylcarbamoyl group on adenosine at position 37 (t(6)A37) in tRNAs that read codons beginning with adenine. Catalyzes the conversion of L-threonine, HCO(3)(-)/CO(2) and ATP to give threonylcarbamoyl-AMP (TC-AMP) as the acyladenylate intermediate, with the release of diphosphate. The chain is Threonylcarbamoyl-AMP synthase from Pseudomonas putida (strain GB-1).